Here is a 240-residue protein sequence, read N- to C-terminus: tRNA (guanine-N(1)-)-methyltransferase (240 aa).

S-adenosyl-L-methionine contacts are provided by residues glycine 108 and 127 to 132 (LGDFIL).

The protein belongs to the RNA methyltransferase TrmD family. Homodimer.

The protein resides in the cytoplasm. It catalyses the reaction guanosine(37) in tRNA + S-adenosyl-L-methionine = N(1)-methylguanosine(37) in tRNA + S-adenosyl-L-homocysteine + H(+). Specifically methylates guanosine-37 in various tRNAs. The chain is tRNA (guanine-N(1)-)-methyltransferase from Streptococcus mutans serotype c (strain ATCC 700610 / UA159).